We begin with the raw amino-acid sequence, 440 residues long: Argininosuccinate lyase (440 aa).

It belongs to the lyase 1 family. Argininosuccinate lyase subfamily.

The protein resides in the cytoplasm. It catalyses the reaction 2-(N(omega)-L-arginino)succinate = fumarate + L-arginine. Its pathway is amino-acid biosynthesis; L-arginine biosynthesis; L-arginine from L-ornithine and carbamoyl phosphate: step 3/3. This chain is Argininosuccinate lyase, found in Clostridium botulinum (strain Okra / Type B1).